A 626-amino-acid polypeptide reads, in one-letter code: Glutamate--cysteine ligase (626 aa).

The protein belongs to the glutamate--cysteine ligase type 3 family. In terms of assembly, monomer.

The enzyme catalyses L-cysteine + L-glutamate + ATP = gamma-L-glutamyl-L-cysteine + ADP + phosphate + H(+). Its pathway is sulfur metabolism; glutathione biosynthesis; glutathione from L-cysteine and L-glutamate: step 1/2. Its function is as follows. An essential enzyme in glutathione (L-gamma-glutamyl-L-cysteinylglycine, GSH) biosynthesis, GSH is essential for growth and differentiation to prespore stage. Catalyzes the condensation of glutamate to cysteine. This Dictyostelium discoideum (Social amoeba) protein is Glutamate--cysteine ligase (gcsA).